The chain runs to 207 residues: Small ribosomal subunit protein uS4 (207 aa).

A disordered region spans residues 30-51; the sequence is DKSKFDSKPGQHGRTSGARTSD. The 61-residue stretch at 97–157 folds into the S4 RNA-binding domain; it reads SRLDNVVYRM…EKSKKQGRIA (61 aa).

It belongs to the universal ribosomal protein uS4 family. As to quaternary structure, part of the 30S ribosomal subunit. Contacts protein S5. The interaction surface between S4 and S5 is involved in control of translational fidelity.

In terms of biological role, one of the primary rRNA binding proteins, it binds directly to 16S rRNA where it nucleates assembly of the body of the 30S subunit. Its function is as follows. With S5 and S12 plays an important role in translational accuracy. The chain is Small ribosomal subunit protein uS4 from Verminephrobacter eiseniae (strain EF01-2).